The chain runs to 137 residues: MRYLGLDLGRARIGLALADDVLRTARPLSVVRHRTREADLASIAATLREWEVGTAVVGLPLNMDGSEGASARYARAFAEELARATGVPVELFDERLSTFEAESRLREQGFSARELRGRVDAEAAAVILQGWLDGRHA.

It belongs to the YqgF nuclease family.

The protein resides in the cytoplasm. In terms of biological role, could be a nuclease involved in processing of the 5'-end of pre-16S rRNA. In Anaeromyxobacter sp. (strain Fw109-5), this protein is Putative pre-16S rRNA nuclease.